The following is a 222-amino-acid chain: Small ribosomal subunit protein uS7m (222 aa).

This sequence belongs to the universal ribosomal protein uS7 family. As to quaternary structure, part of the small ribosomal subunit.

It localises to the mitochondrion. Functionally, one of the primary rRNA binding proteins, it binds directly to 18S rRNA where it nucleates assembly of the head domain of the small subunit. This Prototheca wickerhamii protein is Small ribosomal subunit protein uS7m (RPS7).